Consider the following 351-residue polypeptide: Ribosomal RNA large subunit methyltransferase N (351 aa).

Glu-92 (proton acceptor) is an active-site residue. Positions Gly-105–Glu-337 constitute a Radical SAM core domain. Cys-112 and Cys-342 form a disulfide bridge. 3 residues coordinate [4Fe-4S] cluster: Cys-119, Cys-123, and Cys-126. S-adenosyl-L-methionine-binding positions include Gly-169–Glu-170, Ser-201, Ser-224–His-226, and Asn-300. Cys-342 functions as the S-methylcysteine intermediate in the catalytic mechanism.

It belongs to the radical SAM superfamily. RlmN family. [4Fe-4S] cluster serves as cofactor.

It is found in the cytoplasm. It carries out the reaction adenosine(2503) in 23S rRNA + 2 reduced [2Fe-2S]-[ferredoxin] + 2 S-adenosyl-L-methionine = 2-methyladenosine(2503) in 23S rRNA + 5'-deoxyadenosine + L-methionine + 2 oxidized [2Fe-2S]-[ferredoxin] + S-adenosyl-L-homocysteine. In terms of biological role, specifically methylates position 2 of adenine 2503 in 23S rRNA. The protein is Ribosomal RNA large subunit methyltransferase N of Nitrosopumilus maritimus (strain SCM1).